The sequence spans 216 residues: MSYPENVVVLKSNHQLKGLFTIIRNRETKREDFIFYSDRIIRLLIEEGLYCLPFHETTITTPTGCEYQGVTFASKICGVSIVRAGESMEAGLRAVCKHIKIGKILIQRDEETALPKLLYAKLPHDIANRQVLLLDPMLATGGTVTQAVEVLLERGVKEENIVFINLVASPEGIKVFTDKYPRVKVVTGEIDSHLNEKKYIIPGLGDFGNLYFGTED.

GTP contacts are provided by residues arginine 30, arginine 39, 73-76 (ASKI), and lysine 75. Residue arginine 83 coordinates 5-phospho-alpha-D-ribose 1-diphosphate. Residue lysine 100 coordinates GTP. Arginine 108 provides a ligand contact to 5-phospho-alpha-D-ribose 1-diphosphate. Arginine 129 lines the GTP pocket. Residues aspartate 135 and 135-143 (DPMLATGGT) contribute to the 5-phospho-alpha-D-ribose 1-diphosphate site. Tyrosine 199 serves as a coordination point for D-ribose 5-phosphate. Residues isoleucine 200 and 205 to 207 (GDF) each bind uracil. Aspartate 206 lines the 5-phospho-alpha-D-ribose 1-diphosphate pocket.

It belongs to the UPRTase family. Mg(2+) is required as a cofactor.

It catalyses the reaction UMP + diphosphate = 5-phospho-alpha-D-ribose 1-diphosphate + uracil. It functions in the pathway pyrimidine metabolism; UMP biosynthesis via salvage pathway; UMP from uracil: step 1/1. Its activity is regulated as follows. Allosterically activated by GTP. Functionally, catalyzes the conversion of uracil and 5-phospho-alpha-D-ribose 1-diphosphate (PRPP) to UMP and diphosphate. The polypeptide is Uracil phosphoribosyltransferase (uprt) (Dictyostelium discoideum (Social amoeba)).